The chain runs to 160 residues: Cytochrome b6-f complex subunit 4 (160 aa).

3 consecutive transmembrane segments (helical) span residues 36-56 (LLYIFPVVILGTIACNVGLAV), 95-115 (LLGVLLMVSVPAGLLTVPFLE), and 131-151 (TVFLIGTAVALWLGIGATLPI).

This sequence belongs to the cytochrome b family. PetD subfamily. As to quaternary structure, the 4 large subunits of the cytochrome b6-f complex are cytochrome b6, subunit IV (17 kDa polypeptide, petD), cytochrome f and the Rieske protein, while the 4 small subunits are petG, petL, petM and petN. The complex functions as a dimer.

It is found in the plastid. The protein localises to the chloroplast thylakoid membrane. Functionally, component of the cytochrome b6-f complex, which mediates electron transfer between photosystem II (PSII) and photosystem I (PSI), cyclic electron flow around PSI, and state transitions. The polypeptide is Cytochrome b6-f complex subunit 4 (Morus indica (Mulberry)).